The chain runs to 365 residues: PHD finger protein 6 (365 aa).

An N-acetylserine modification is found at Ser-2. 2 short sequence motifs (nuclear localization signal) span residues 13–16 (RQRK) and 129–133 (RKHKK). The C2HC pre-PHD-type 1 zinc finger occupies 14 to 52 (QRKCGFCKSNRDKECGQLLISENQKVAAHHKCMLFSSAL). An extended PHD1 domain (ePHD1) region spans residues 14 to 132 (QRKCGFCKSN…IYMVYCRKHK (119 aa)). Residues 80 to 132 (LMCSLCHCPGATIGCDVKTCHRTYHYHCALHDKAQIREKPSQGIYMVYCRKHK) form a PHD-type 1 zinc finger. Ser-138, Ser-145, and Ser-155 each carry phosphoserine. Residues 139–211 (EADLEESFNE…RSSPSDTRPK (73 aa)) are disordered. The short motif at 157–169 (KSKKKSRKGRPRK) is the Nucleolar localization signal element. Residues 157–171 (KSKKKSRKGRPRKTN) show a composition bias toward basic residues. A Glycyl lysine isopeptide (Lys-Gly) (interchain with G-Cter in SUMO2) cross-link involves residue Lys-173. Phosphoserine occurs at positions 183 and 199. A C2HC pre-PHD-type 2 zinc finger spans residues 209-249 (RPKCGFCHVGEEENEARGKLHIFNAKKAAAHYKCMLFSSGT). The interval 209 to 330 (RPKCGFCHVG…IYKLYCKNHS (122 aa)) is extended PHD2 domain (ePHD2). A Glycyl lysine isopeptide (Lys-Gly) (interchain with G-Cter in SUMO2) cross-link involves residue Lys-227. The PHD-type 2 zinc-finger motif lies at 278 to 330 (MKCTLCSQPGATIGCEIKACVKTYHYHCGVQDKAKYIENMSRGIYKLYCKNHS). The disordered stretch occupies residues 330-365 (SGNDERDEEDEERESKSRGKVEIDQQQLTQQQLNGN). Basic and acidic residues predominate over residues 342–352 (RESKSRGKVEI). A compositionally biased stretch (low complexity) spans 354 to 365 (QQQLTQQQLNGN). The residue at position 358 (Thr-358) is a Phosphothreonine.

In terms of assembly, interacts with UBTF. Interacts with the NuRD complex component RBBP4 (via the nucleolar localization motif), the interaction mediates transcriptional repression activity.

Its subcellular location is the nucleus. The protein localises to the nucleolus. The protein resides in the chromosome. It localises to the centromere. It is found in the kinetochore. Functionally, transcriptional regulator that associates with ribosomal RNA promoters and suppresses ribosomal RNA (rRNA) transcription. The sequence is that of PHD finger protein 6 (PHF6) from Pongo abelii (Sumatran orangutan).